The chain runs to 356 residues: CMP-sialic acid transporter 2 (356 aa).

The span at 1–24 shows a compositional bias: basic and acidic residues; that stretch reads MEYRRVKDQESYDVVSQKDIESPG. Positions 1-43 are disordered; that stretch reads MEYRRVKDQESYDVVSQKDIESPGERSLSSTSATSSLSTAGAS. Residues 1–52 are Cytoplasmic-facing; it reads MEYRRVKDQESYDVVSQKDIESPGERSLSSTSATSSLSTAGASKGNNSWKLK. Low complexity predominate over residues 27–43; it reads SLSSTSATSSLSTAGAS. A helical membrane pass occupies residues 53 to 73; that stretch reads SIVTLALTLLTSSQAILIVWS. Topologically, residues 74-82 are lumenal; it reads KRAGKYEYS. A helical transmembrane segment spans residues 83 to 103; the sequence is VTTANFSVEALKCLLSLIALY. The Cytoplasmic segment spans residues 104–125; that stretch reads RTWNSQGVTEDNRLSTSFDEVS. The chain crosses the membrane as a helical span at residues 126 to 146; the sequence is VYPIPAILYMVKNLLQYYIFA. The Lumenal segment spans residues 147–149; sequence YVD. A helical transmembrane segment spans residues 150-172; that stretch reads APAYQILKNLNIISTGVLYRIIL. Over 173-175 the chain is Cytoplasmic; it reads KKK. A helical transmembrane segment spans residues 176-196; the sequence is LSEIQWAAFILLCAGCTTAQL. Residues 197–211 are Lumenal-facing; sequence NPSSDHVLQTPIQGW. A helical membrane pass occupies residues 212 to 232; that stretch reads VMAIVMALLSGFAGVYTEAII. Topologically, residues 233–239 are cytoplasmic; the sequence is KKRPSRN. Residues 240–260 traverse the membrane as a helical segment; the sequence is INVQNFWLYIFGMLFNLVAIC. Over 261–277 the chain is Lumenal; that stretch reads VQDFDAVMNKGFFHGYS. A helical membrane pass occupies residues 278 to 298; it reads FITVLMILNHALSGIAVSMVM. Topologically, residues 299 to 314 are cytoplasmic; the sequence is KYADNIVKVYSTSVAM. The helical transmembrane segment at 315-335 threads the bilayer; it reads LLTAVVSVFLFGFHLSLAFFL. Over 336-356 the chain is Lumenal; that stretch reads GSTVVSVSVYLHSVGKPQPQK.

The protein belongs to the nucleotide-sugar transporter family. CMP-Sialate:CMP antiporter (TC 2.A.7.12) subfamily.

The protein resides in the golgi apparatus membrane. Functionally, sugar transporter involved in the transport of CMP-sialic acid from the cytoplasm into the Golgi. May transport important nucleotide sugars such as CMP-Kdo (2-keto-3-deoxy-D-manno-octulosonic acid) in physiological conditions. This chain is CMP-sialic acid transporter 2, found in Oryza sativa subsp. indica (Rice).